Here is a 363-residue protein sequence, read N- to C-terminus: NADH-quinone oxidoreductase subunit H (363 aa).

Helical transmembrane passes span 29-49 (VLKI…YVVW), 62-82 (GPMY…KLLF), 96-116 (FIIA…VVPF), 127-147 (VGLL…ILAG), 163-183 (AAQV…VMIA), 202-222 (FFDW…VSGV), 238-257 (EIVA…LFFL), 264-286 (ILVS…QGWV), 299-319 (KGGW…YIWF), and 339-359 (FIPL…YGVI).

The protein belongs to the complex I subunit 1 family. In terms of assembly, NDH-1 is composed of 14 different subunits. Subunits NuoA, H, J, K, L, M, N constitute the membrane sector of the complex.

The protein localises to the cell inner membrane. The catalysed reaction is a quinone + NADH + 5 H(+)(in) = a quinol + NAD(+) + 4 H(+)(out). In terms of biological role, NDH-1 shuttles electrons from NADH, via FMN and iron-sulfur (Fe-S) centers, to quinones in the respiratory chain. The immediate electron acceptor for the enzyme in this species is believed to be ubiquinone. Couples the redox reaction to proton translocation (for every two electrons transferred, four hydrogen ions are translocated across the cytoplasmic membrane), and thus conserves the redox energy in a proton gradient. This subunit may bind ubiquinone. This Xanthomonas oryzae pv. oryzae (strain PXO99A) protein is NADH-quinone oxidoreductase subunit H.